The chain runs to 230 residues: Cytidylate kinase (230 aa).

Residue 14–22 coordinates ATP; that stretch reads GPSGVGKSS.

This sequence belongs to the cytidylate kinase family. Type 1 subfamily.

It is found in the cytoplasm. The enzyme catalyses CMP + ATP = CDP + ADP. It catalyses the reaction dCMP + ATP = dCDP + ADP. The sequence is that of Cytidylate kinase from Buchnera aphidicola subsp. Baizongia pistaciae (strain Bp).